The sequence spans 508 residues: MGLPWYRVHTVVLNDPGRLLSVHIMHTALVAGWAGSMALYELAVFDPSDPVLDPMWRQGMFVIPFMTRLGITNSWGGWSVTGGAIPNPGIWSYEGVAGAHIVFSGLCFLAAIWHWVYWDLEIFSDERTGKPSLDLPKIFGIHLFLAGVACFGFGAFHVTGLYGPGIWVSDPYGLTGKVQSVNPAWGVEGFDPFVPGGIASHHIAAGTLGILAGLFHLSVRPPQRLYKGLRMGNIETVLSSSIAAVFFAAFVVAGTMWYGSATTPIELFGPTRYQWDQGYFQQEIYRRVSAGLAENQSLSEAWSKIPEKLAFYDYIGNNPAKGGLFRAGSMDNGDGIAVGWLGHPIFRDKEGRELFVRRMPTFFETFPVVLVDGDGIVRADVPFRRAESKYSVEQVGVTVEFYGGELNGVSYSDPATVKKYARRAQLGEIFELDRATLKSDGVFRSSPRGWFTFGHASFALLFFFGHIWHGARTLFRDVFAGIDPDLDAQVEFGAFQKLGDPTTRRQVV.

The next 6 membrane-spanning stretches (helical) occupy residues serine 21–serine 36, isoleucine 101–tryptophan 115, glycine 140–phenylalanine 156, isoleucine 203–serine 218, valine 237–valine 252, and serine 457–arginine 472.

This sequence belongs to the PsbB/PsbC family. PsbB subfamily. As to quaternary structure, PSII is composed of 1 copy each of membrane proteins PsbA, PsbB, PsbC, PsbD, PsbE, PsbF, PsbH, PsbI, PsbJ, PsbK, PsbL, PsbM, PsbT, PsbX, PsbY, PsbZ, Psb30/Ycf12, at least 3 peripheral proteins of the oxygen-evolving complex and a large number of cofactors. It forms dimeric complexes. The cofactor is Binds multiple chlorophylls. PSII binds additional chlorophylls, carotenoids and specific lipids..

The protein resides in the plastid. It localises to the chloroplast thylakoid membrane. One of the components of the core complex of photosystem II (PSII). It binds chlorophyll and helps catalyze the primary light-induced photochemical processes of PSII. PSII is a light-driven water:plastoquinone oxidoreductase, using light energy to abstract electrons from H(2)O, generating O(2) and a proton gradient subsequently used for ATP formation. The protein is Photosystem II CP47 reaction center protein of Panax ginseng (Korean ginseng).